A 630-amino-acid chain; its full sequence is 1-deoxy-D-xylulose-5-phosphate synthase (630 aa).

Residues His-87 and Gly-128–Ser-130 contribute to the thiamine diphosphate site. Asp-159 serves as a coordination point for Mg(2+). Residues Gly-160–Ala-161, Asn-188, Phe-295, and Glu-377 contribute to the thiamine diphosphate site. Asn-188 is a binding site for Mg(2+).

The protein belongs to the transketolase family. DXPS subfamily. Homodimer. The cofactor is Mg(2+). Thiamine diphosphate serves as cofactor.

It catalyses the reaction D-glyceraldehyde 3-phosphate + pyruvate + H(+) = 1-deoxy-D-xylulose 5-phosphate + CO2. Its pathway is metabolic intermediate biosynthesis; 1-deoxy-D-xylulose 5-phosphate biosynthesis; 1-deoxy-D-xylulose 5-phosphate from D-glyceraldehyde 3-phosphate and pyruvate: step 1/1. Functionally, catalyzes the acyloin condensation reaction between C atoms 2 and 3 of pyruvate and glyceraldehyde 3-phosphate to yield 1-deoxy-D-xylulose-5-phosphate (DXP). The chain is 1-deoxy-D-xylulose-5-phosphate synthase from Pseudomonas syringae pv. syringae (strain B728a).